The chain runs to 225 residues: Phosphatidylserine decarboxylase proenzyme (225 aa).

The active-site Schiff-base intermediate with substrate; via pyruvic acid is the Ser188. Ser188 is modified (pyruvic acid (Ser); by autocatalysis).

This sequence belongs to the phosphatidylserine decarboxylase family. PSD-A subfamily. In terms of assembly, heterodimer of a large membrane-associated beta subunit and a small pyruvoyl-containing alpha subunit. It depends on pyruvate as a cofactor. Post-translationally, is synthesized initially as an inactive proenzyme. Formation of the active enzyme involves a self-maturation process in which the active site pyruvoyl group is generated from an internal serine residue via an autocatalytic post-translational modification. Two non-identical subunits are generated from the proenzyme in this reaction, and the pyruvate is formed at the N-terminus of the alpha chain, which is derived from the carboxyl end of the proenzyme. The post-translation cleavage follows an unusual pathway, termed non-hydrolytic serinolysis, in which the side chain hydroxyl group of the serine supplies its oxygen atom to form the C-terminus of the beta chain, while the remainder of the serine residue undergoes an oxidative deamination to produce ammonia and the pyruvoyl prosthetic group on the alpha chain.

The protein resides in the cell membrane. The enzyme catalyses a 1,2-diacyl-sn-glycero-3-phospho-L-serine + H(+) = a 1,2-diacyl-sn-glycero-3-phosphoethanolamine + CO2. The protein operates within phospholipid metabolism; phosphatidylethanolamine biosynthesis; phosphatidylethanolamine from CDP-diacylglycerol: step 2/2. Its function is as follows. Catalyzes the formation of phosphatidylethanolamine (PtdEtn) from phosphatidylserine (PtdSer). In Parvibaculum lavamentivorans (strain DS-1 / DSM 13023 / NCIMB 13966), this protein is Phosphatidylserine decarboxylase proenzyme.